A 386-amino-acid chain; its full sequence is Formate-dependent phosphoribosylglycinamide formyltransferase (386 aa).

Residues 15 to 16 and Glu-75 each bind N(1)-(5-phospho-beta-D-ribosyl)glycinamide; that span reads EL. ATP contacts are provided by residues Arg-107, Lys-148, 153 to 158, 188 to 191, and Glu-196; these read SSGKGQ and EQFI. Positions 112–301 constitute an ATP-grasp domain; sequence ALAVQQLNLQ…EFELHLRAIV (190 aa). Mg(2+) is bound by residues Glu-260 and Glu-272. N(1)-(5-phospho-beta-D-ribosyl)glycinamide-binding positions include Asp-279, Lys-349, and 356–357; that span reads RR.

This sequence belongs to the PurK/PurT family. In terms of assembly, homodimer.

It catalyses the reaction N(1)-(5-phospho-beta-D-ribosyl)glycinamide + formate + ATP = N(2)-formyl-N(1)-(5-phospho-beta-D-ribosyl)glycinamide + ADP + phosphate + H(+). Its pathway is purine metabolism; IMP biosynthesis via de novo pathway; N(2)-formyl-N(1)-(5-phospho-D-ribosyl)glycinamide from N(1)-(5-phospho-D-ribosyl)glycinamide (formate route): step 1/1. Functionally, involved in the de novo purine biosynthesis. Catalyzes the transfer of formate to 5-phospho-ribosyl-glycinamide (GAR), producing 5-phospho-ribosyl-N-formylglycinamide (FGAR). Formate is provided by PurU via hydrolysis of 10-formyl-tetrahydrofolate. The polypeptide is Formate-dependent phosphoribosylglycinamide formyltransferase (Francisella tularensis subsp. holarctica (strain LVS)).